The chain runs to 204 residues: Small ribosomal subunit protein uS4 (204 aa).

The tract at residues 20 to 46 is disordered; it reads WGRPKSPINKREYGPGEHGQRRRKPSD. Residues 28–38 show a composition bias toward basic and acidic residues; sequence NKREYGPGEHG. The 64-residue stretch at 93–156 folds into the S4 RNA-binding domain; the sequence is TRLDAVVYRM…RQMPLILEAL (64 aa).

The protein belongs to the universal ribosomal protein uS4 family. In terms of assembly, part of the 30S ribosomal subunit. Contacts protein S5. The interaction surface between S4 and S5 is involved in control of translational fidelity.

One of the primary rRNA binding proteins, it binds directly to 16S rRNA where it nucleates assembly of the body of the 30S subunit. Its function is as follows. With S5 and S12 plays an important role in translational accuracy. The sequence is that of Small ribosomal subunit protein uS4 from Rhodospirillum rubrum (strain ATCC 11170 / ATH 1.1.1 / DSM 467 / LMG 4362 / NCIMB 8255 / S1).